The sequence spans 169 residues: Zinc metalloproteinase-disintegrin-like mikarin (169 aa).

Positions 14–57 (KYLEYVVVDNNMYRNYGNAGPCVMSAEISFEPLQEFSSCDIQEP) constitute a Peptidase M12B domain. In terms of domain architecture, Disintegrin spans 65–129 (PAVCGNYYVE…PEICTGRSAK (65 aa)). 6 cysteine pairs are disulfide-bonded: cysteine 68/cysteine 97, cysteine 79/cysteine 92, cysteine 81/cysteine 87, cysteine 105/cysteine 111, cysteine 110/cysteine 123, and cysteine 150/cysteine 161. The D/ECD-tripeptide motif lies at 116–118 (DCD).

This sequence belongs to the venom metalloproteinase (M12B) family. P-III subfamily. P-IIIa sub-subfamily. As to quaternary structure, monomer. Requires Zn(2+) as cofactor. In terms of tissue distribution, expressed by the venom gland.

It is found in the secreted. Inhibited by EDTA, but not by PMSF. In terms of biological role, snake venom zinc metalloproteinase that calcium-independently catalyzes the conversion of prothrombin (F2) to alpha-thrombin through the formation of a thrombin intermediate. The protein is Zinc metalloproteinase-disintegrin-like mikarin of Micropechis ikaheca (New Guinean small-eyed snake).